Here is a 558-residue protein sequence, read N- to C-terminus: Aurovertin biosynthesis cluster transcription factor aurF (558 aa).

This sequence belongs to the POU transcription factor family. Class-3 subfamily.

The protein localises to the nucleus. In terms of biological role, transcription factor that regulates the expression of the gene cluster that mediates the biosynthesis of aurovertins, fungal polyketides that exhibit potent inhibition of adenosine triphosphate synthase. The protein is Aurovertin biosynthesis cluster transcription factor aurF of Calcarisporium arbuscula (Dendryphion arbuscula).